The sequence spans 231 residues: NADH-ubiquinone oxidoreductase chain 4 (231 aa).

6 helical membrane-spanning segments follow: residues 1-21, 34-54, 62-84, 89-111, 128-148, and 169-189; these read PIAG…YGII, MFLP…LTCL, LIAY…QTPW, AMAL…NTTY, ILPM…AIPP, and TIIM…HMFL.

It belongs to the complex I subunit 4 family.

It localises to the mitochondrion membrane. The enzyme catalyses a ubiquinone + NADH + 5 H(+)(in) = a ubiquinol + NAD(+) + 4 H(+)(out). Core subunit of the mitochondrial membrane respiratory chain NADH dehydrogenase (Complex I) that is believed to belong to the minimal assembly required for catalysis. Complex I functions in the transfer of electrons from NADH to the respiratory chain. The immediate electron acceptor for the enzyme is believed to be ubiquinone. The chain is NADH-ubiquinone oxidoreductase chain 4 (MT-ND4) from Bothrops erythromelas (Caatinga lance head).